The chain runs to 358 residues: UDP-N-acetylglucosamine--N-acetylmuramyl-(pentapeptide) pyrophosphoryl-undecaprenol N-acetylglucosamine transferase (358 aa).

Residues 11-13 (TGG), arginine 163, serine 191, isoleucine 245, and glutamine 290 each bind UDP-N-acetyl-alpha-D-glucosamine.

Belongs to the glycosyltransferase 28 family. MurG subfamily.

It is found in the cell inner membrane. The enzyme catalyses di-trans,octa-cis-undecaprenyl diphospho-N-acetyl-alpha-D-muramoyl-L-alanyl-D-glutamyl-meso-2,6-diaminopimeloyl-D-alanyl-D-alanine + UDP-N-acetyl-alpha-D-glucosamine = di-trans,octa-cis-undecaprenyl diphospho-[N-acetyl-alpha-D-glucosaminyl-(1-&gt;4)]-N-acetyl-alpha-D-muramoyl-L-alanyl-D-glutamyl-meso-2,6-diaminopimeloyl-D-alanyl-D-alanine + UDP + H(+). It participates in cell wall biogenesis; peptidoglycan biosynthesis. Its function is as follows. Cell wall formation. Catalyzes the transfer of a GlcNAc subunit on undecaprenyl-pyrophosphoryl-MurNAc-pentapeptide (lipid intermediate I) to form undecaprenyl-pyrophosphoryl-MurNAc-(pentapeptide)GlcNAc (lipid intermediate II). This chain is UDP-N-acetylglucosamine--N-acetylmuramyl-(pentapeptide) pyrophosphoryl-undecaprenol N-acetylglucosamine transferase, found in Janthinobacterium sp. (strain Marseille) (Minibacterium massiliensis).